A 333-amino-acid polypeptide reads, in one-letter code: Putative fimbrium anchoring subunit Fim4B (333 aa).

The N-terminal stretch at 1-20 (MRNTRYGFLVLLSSLLMLTG) is a signal peptide. C21 carries N-palmitoyl cysteine lipidation. The S-diacylglycerol cysteine moiety is linked to residue C21. The disordered stretch occupies residues 274 to 333 (ENAGTGEDGKPTPPPEIELPPDDKIEVDKPETPPNPDGGGGMGGNVDGWGPEDNVELPVN). A compositionally biased stretch (basic and acidic residues) spans 294 to 304 (PDDKIEVDKPE). The segment covering 310 to 320 (DGGGGMGGNVD) has biased composition (gly residues).

This sequence belongs to the bacteroidetes fimbrillin superfamily. FimB/Mfa2 family.

It is found in the cell outer membrane. Putative fimbrium anchoring subunit. The sequence is that of Putative fimbrium anchoring subunit Fim4B from Bacteroides ovatus (strain ATCC 8483 / DSM 1896 / JCM 5824 / BCRC 10623 / CCUG 4943 / NCTC 11153).